A 128-amino-acid polypeptide reads, in one-letter code: Small ribosomal subunit protein uS13 (128 aa).

The segment covering 95–118 has biased composition (basic residues); it reads GLPVRGQRTHTNARTRKGPKKGLV. Residues 95 to 128 form a disordered region; the sequence is GLPVRGQRTHTNARTRKGPKKGLVRKAAAPAPKA.

The protein belongs to the universal ribosomal protein uS13 family. In terms of assembly, part of the 30S ribosomal subunit. Forms a loose heterodimer with protein S19. Forms two bridges to the 50S subunit in the 70S ribosome.

In terms of biological role, located at the top of the head of the 30S subunit, it contacts several helices of the 16S rRNA. In the 70S ribosome it contacts the 23S rRNA (bridge B1a) and protein L5 of the 50S subunit (bridge B1b), connecting the 2 subunits; these bridges are implicated in subunit movement. Contacts the tRNAs in the A and P-sites. The chain is Small ribosomal subunit protein uS13 from Anaeromyxobacter sp. (strain K).